Consider the following 416-residue polypeptide: Gamma-glutamyl phosphate reductase (416 aa).

The protein belongs to the gamma-glutamyl phosphate reductase family.

It localises to the cytoplasm. The enzyme catalyses L-glutamate 5-semialdehyde + phosphate + NADP(+) = L-glutamyl 5-phosphate + NADPH + H(+). The protein operates within amino-acid biosynthesis; L-proline biosynthesis; L-glutamate 5-semialdehyde from L-glutamate: step 2/2. Catalyzes the NADPH-dependent reduction of L-glutamate 5-phosphate into L-glutamate 5-semialdehyde and phosphate. The product spontaneously undergoes cyclization to form 1-pyrroline-5-carboxylate. The sequence is that of Gamma-glutamyl phosphate reductase from Streptococcus pyogenes serotype M6 (strain ATCC BAA-946 / MGAS10394).